A 96-amino-acid polypeptide reads, in one-letter code: UPF0235 protein ESA_00387 (96 aa).

The protein belongs to the UPF0235 family.

The sequence is that of UPF0235 protein ESA_00387 from Cronobacter sakazakii (strain ATCC BAA-894) (Enterobacter sakazakii).